The chain runs to 336 residues: Dihydroorotate dehydrogenase (quinone) (336 aa).

FMN is bound by residues 62–66 (AGLDK) and Thr86. Lys66 contacts substrate. 111-115 (NRMGF) lines the substrate pocket. FMN is bound by residues Asn139 and Asn172. Asn172 contacts substrate. The active-site Nucleophile is Ser175. A substrate-binding site is contributed by Asn177. Residues Lys217 and Thr245 each coordinate FMN. 246-247 (NT) contacts substrate. FMN is bound by residues Gly268, Gly297, and 318 to 319 (YS).

It belongs to the dihydroorotate dehydrogenase family. Type 2 subfamily. Monomer. It depends on FMN as a cofactor.

It is found in the cell membrane. The catalysed reaction is (S)-dihydroorotate + a quinone = orotate + a quinol. It participates in pyrimidine metabolism; UMP biosynthesis via de novo pathway; orotate from (S)-dihydroorotate (quinone route): step 1/1. Functionally, catalyzes the conversion of dihydroorotate to orotate with quinone as electron acceptor. In Escherichia coli (strain SE11), this protein is Dihydroorotate dehydrogenase (quinone).